Here is a 389-residue protein sequence, read N- to C-terminus: N-terminal EF-hand calcium-binding protein 2 (389 aa).

R10 carries the omega-N-methylarginine modification. R42 bears the Asymmetric dimethylarginine mark. EF-hand domains are found at residues 63 to 98 (GGTAVILDIFRRADKNDDGKLSLEEFQLFFADGVLN) and 99 to 132 (EKELEGLFHTIDSDNTNHVDTKELCDYFVEHMGD). Ca(2+) is bound by residues D76, N78, D80, K82, E87, D110, D112, T114, H116, and E121. The stretch at 173–198 (LKETANQIQSLLSSVESAVEAIEEQT) forms a coiled coil. An ABM domain is found at 289-377 (QLVRQEMAVC…LSQPEALSQI (89 aa)).

In terms of assembly, interacts (calcium-dependent) with ADORA2A and GRM5. Expressed in the iris, in the ciliary margin of the retina and in the inner portion of the neural retina. Expressed in the spinal dorsal horn with especially strong expression in lamina IIi; found in excitory synaptic boutons (at protein level).

Its subcellular location is the cytoplasm. The protein localises to the cell projection. It localises to the dendrite. It is found in the axon. The protein resides in the cell membrane. In terms of biological role, may act as a signaling scaffold protein that senses intracellular calcium. Can modulate ligand-induced internalization of ADORA2A and coupling efficiency of mGluR5/GRM5; for both receptors may regulate signaling activity such as promoting MAPK1/3 (ERK1/2) activation. The protein is N-terminal EF-hand calcium-binding protein 2 (Necab2) of Mus musculus (Mouse).